The primary structure comprises 359 residues: UDP-3-O-acylglucosamine N-acyltransferase (359 aa).

Histidine 256 acts as the Proton acceptor in catalysis.

The protein belongs to the transferase hexapeptide repeat family. LpxD subfamily. In terms of assembly, homotrimer.

It carries out the reaction a UDP-3-O-[(3R)-3-hydroxyacyl]-alpha-D-glucosamine + a (3R)-hydroxyacyl-[ACP] = a UDP-2-N,3-O-bis[(3R)-3-hydroxyacyl]-alpha-D-glucosamine + holo-[ACP] + H(+). It functions in the pathway bacterial outer membrane biogenesis; LPS lipid A biosynthesis. Catalyzes the N-acylation of UDP-3-O-acylglucosamine using 3-hydroxyacyl-ACP as the acyl donor. Is involved in the biosynthesis of lipid A, a phosphorylated glycolipid that anchors the lipopolysaccharide to the outer membrane of the cell. This chain is UDP-3-O-acylglucosamine N-acyltransferase, found in Rhodopseudomonas palustris (strain BisB5).